The sequence spans 285 residues: Bis(5'-nucleosyl)-tetraphosphatase, symmetrical (285 aa).

Belongs to the Ap4A hydrolase family.

The enzyme catalyses P(1),P(4)-bis(5'-adenosyl) tetraphosphate + H2O = 2 ADP + 2 H(+). Hydrolyzes diadenosine 5',5'''-P1,P4-tetraphosphate to yield ADP. The protein is Bis(5'-nucleosyl)-tetraphosphatase, symmetrical of Pseudomonas entomophila (strain L48).